The chain runs to 65 residues: Metallothionein-like protein type 3 (65 aa).

This sequence belongs to the metallothionein superfamily. Type 15 family.

In terms of biological role, metallothioneins have a high content of cysteine residues that bind various heavy metals. The polypeptide is Metallothionein-like protein type 3 (Carica papaya (Papaya)).